Here is a 178-residue protein sequence, read N- to C-terminus: Translation initiation factor IF-3 (178 aa).

Residues 1 to 20 are disordered; sequence MRRPFRATPVQKDGPRSNRD.

It belongs to the IF-3 family. Monomer.

The protein resides in the cytoplasm. IF-3 binds to the 30S ribosomal subunit and shifts the equilibrium between 70S ribosomes and their 50S and 30S subunits in favor of the free subunits, thus enhancing the availability of 30S subunits on which protein synthesis initiation begins. The polypeptide is Translation initiation factor IF-3 (Brucella anthropi (strain ATCC 49188 / DSM 6882 / CCUG 24695 / JCM 21032 / LMG 3331 / NBRC 15819 / NCTC 12168 / Alc 37) (Ochrobactrum anthropi)).